Consider the following 333-residue polypeptide: Photosystem II assembly lipoprotein Ycf48 (333 aa).

An N-terminal signal peptide occupies residues 1 to 23 (MKRLLNSATQLLLVLVLGISLSG). The N-palmitoyl cysteine moiety is linked to residue Cys-24. Cys-24 carries S-diacylglycerol cysteine lipidation.

It belongs to the Ycf48 family. As to quaternary structure, part of early PSII assembly complexes which includes D1 (psbA) and PsbI; not found in mature PSII. Binds to the lumenal side of PSII complexes. Interacts with YidC.

The protein resides in the cellular thylakoid membrane. In terms of biological role, a factor required for optimal assembly of photosystem II (PSII), acting in the early stages of PSII assembly. Also plays a role in replacement of photodamaged D1 (psbA). Assists YidC in synthesis of chlorophyll-binding proteins. The protein is Photosystem II assembly lipoprotein Ycf48 of Synechococcus sp. (strain CC9605).